Here is a 95-residue protein sequence, read N- to C-terminus: Beta-alanine degradation protein BauB (95 aa).

The Cupin type-2 domain maps to 23 to 90; it reads WRFAPGAETG…NASAHEVVFV (68 aa).

Its function is as follows. Involved in the degradation of beta-alanine. The sequence is that of Beta-alanine degradation protein BauB (bauB) from Pseudomonas aeruginosa (strain ATCC 15692 / DSM 22644 / CIP 104116 / JCM 14847 / LMG 12228 / 1C / PRS 101 / PAO1).